The chain runs to 232 residues: Orotate phosphoribosyltransferase (232 aa).

Lysine 28 serves as a coordination point for 5-phospho-alpha-D-ribose 1-diphosphate. Phenylalanine 36–phenylalanine 37 contacts orotate. Residues tyrosine 78–lysine 79, arginine 108, lysine 109, lysine 112, histidine 114, and aspartate 134–alanine 142 each bind 5-phospho-alpha-D-ribose 1-diphosphate. Positions 138 and 166 each coordinate orotate.

It belongs to the purine/pyrimidine phosphoribosyltransferase family. PyrE subfamily. As to quaternary structure, homodimer.

The enzyme catalyses orotidine 5'-phosphate + diphosphate = orotate + 5-phospho-alpha-D-ribose 1-diphosphate. It participates in pyrimidine metabolism; UMP biosynthesis via de novo pathway; UMP from orotate: step 1/2. In terms of biological role, catalyzes the transfer of a ribosyl phosphate group from 5-phosphoribose 1-diphosphate to orotate, leading to the formation of orotidine monophosphate (OMP). The chain is Orotate phosphoribosyltransferase (URA5) from Sordaria macrospora.